The following is a 347-amino-acid chain: Heme A synthase (347 aa).

The next 8 helical transmembrane spans lie at 14–34, 95–115, 125–145, 166–186, 198–218, 260–280, 289–309, and 311–331; these read VKVWLCICSIGILLMVLVGGI, YFHRLLGRIVGLIFLLPFLYF, LIVNFIIICVLILFQGVMGWL, LLLALLIFYLLWRQFLSAVIL, LIFYVISILIVIQITFGSLVA, FIHEVIAVLILVIVSATLLIL, LLLVCLLIQLTFGILTFIYNV, and IALASLHQVTAFILFAINTYL. Position 262 (histidine 262) interacts with heme. Residue histidine 317 coordinates heme.

The protein belongs to the COX15/CtaA family. Type 2 subfamily. In terms of assembly, interacts with CtaB. Heme b is required as a cofactor.

It localises to the cell membrane. It carries out the reaction Fe(II)-heme o + 2 A + H2O = Fe(II)-heme a + 2 AH2. It functions in the pathway porphyrin-containing compound metabolism; heme A biosynthesis; heme A from heme O: step 1/1. Catalyzes the conversion of heme O to heme A by two successive hydroxylations of the methyl group at C8. The first hydroxylation forms heme I, the second hydroxylation results in an unstable dihydroxymethyl group, which spontaneously dehydrates, resulting in the formyl group of heme A. The chain is Heme A synthase from Ehrlichia canis (strain Jake).